Consider the following 322-residue polypeptide: D-alanine--D-alanine ligase (322 aa).

The ATP-grasp domain maps to 108-311 (KEFYYNAELP…FPSLLDTLIE (204 aa)). 136–192 (IEDLGLPLVVKPACAGSSIGISLAHTEEELLAGINHARDCSAGAIMVEQFIKGRELT) contacts ATP. Mg(2+) contacts are provided by aspartate 265, glutamate 278, and asparagine 280.

The protein belongs to the D-alanine--D-alanine ligase family. Mg(2+) serves as cofactor. It depends on Mn(2+) as a cofactor.

It localises to the cytoplasm. The catalysed reaction is 2 D-alanine + ATP = D-alanyl-D-alanine + ADP + phosphate + H(+). It functions in the pathway cell wall biogenesis; peptidoglycan biosynthesis. Functionally, cell wall formation. This Desulfotalea psychrophila (strain LSv54 / DSM 12343) protein is D-alanine--D-alanine ligase.